The sequence spans 450 residues: MENIHDLWDRVLAEIEQKISKPSFETWLKSTKAHSLRGDTLVIVAPNEFARDWLDSRYSHLIAETIYTITGEELAVKFIIPPNQDDEELEFQSSKKKQRKPYEETNDFPQSMLNPKYTFDTFVIGSGNRFAHAASLAVAEAPAKAYNPLFIYGGVGLGKTHLMHAIGHYVIEHNPSAKVVYLSSEKFTNEFINAIRDNRPDDFRNKYRNVDVLLIDDIQFLAGKEQTQEEFFHTFNTLHEESKQIVISSDRPPKEIPTLEDRLRSRFEWGLITDITPPDLETRIAILRKKAKAEGFDIPNEVMLYIANQIDSNIRELEGALIRVVAYSSLINKEITADLAAEALKDIIPSAKPKVITIQDIQRVVGQHFNIKMEDFKAKKRTKSVAFPRQIAMYLSRELTDCSLPKIGDEFGGRDHTTVIHAHEKISKLLQTDTQLQRHIQEIQEKLKQL.

The tract at residues 1–84 is domain I, interacts with DnaA modulators; sequence MENIHDLWDR…AVKFIIPPNQ (84 aa). The interval 84-111 is domain II; it reads QDDEELEFQSSKKKQRKPYEETNDFPQS. The interval 89 to 108 is disordered; sequence LEFQSSKKKQRKPYEETNDF. The segment at 112 to 328 is domain III, AAA+ region; it reads MLNPKYTFDT…GALIRVVAYS (217 aa). ATP is bound by residues Gly-156, Gly-158, Lys-159, and Thr-160. The interval 329 to 450 is domain IV, binds dsDNA; the sequence is SLINKEITAD…QEIQEKLKQL (122 aa).

This sequence belongs to the DnaA family. Oligomerizes as a right-handed, spiral filament on DNA at oriC.

The protein localises to the cytoplasm. Functionally, plays an essential role in the initiation and regulation of chromosomal replication. ATP-DnaA binds to the origin of replication (oriC) to initiate formation of the DNA replication initiation complex once per cell cycle. Binds the DnaA box (a 9 base pair repeat at the origin) and separates the double-stranded (ds)DNA. Forms a right-handed helical filament on oriC DNA; dsDNA binds to the exterior of the filament while single-stranded (ss)DNA is stabiized in the filament's interior. The ATP-DnaA-oriC complex binds and stabilizes one strand of the AT-rich DNA unwinding element (DUE), permitting loading of DNA polymerase. After initiation quickly degrades to an ADP-DnaA complex that is not apt for DNA replication. Binds acidic phospholipids. This is Chromosomal replication initiator protein DnaA from Geobacillus kaustophilus (strain HTA426).